The chain runs to 1032 residues: Toll-like receptor 9 (1032 aa).

An N-terminal signal peptide occupies residues 1–25 (MGPCRGALHPLSLLVQAAALALALA). The Extracellular segment spans residues 26-815 (QGTLPAFLPC…QDLRLCLDEA (790 aa)). C35 and C45 form a disulfide bridge. Position 47–51 (47–51 (WLFLK)) interacts with DNA. LRR repeat units lie at residues 62 to 85 (RGNVTSLSLYSNRIHHLHDYDFVH), 87 to 110 (VHLRRLNLKWNCPPASLSPMHFPC), 122 to 147 (VPTLEDLNLSYNSITTVPALPSSLVS), 150 to 166 (LSRTNILVLDPATLAGL), 167 to 190 (YALRFLFLDGNCYYKNPCQQALQV), 198 to 221 (LGNLTHLSLKYNNLTVVPRGLPPS), 223 to 242 (EYLLLSYNHIITLAPEDLAN), 243 to 268 (LTALRVLDVGGNCRRCDHARNPCREC), 283 to 306 (LSHLEGLVLRDSSLYSLDPRWFHG), 308 to 332 (GNLMVLDLSENFLYDCITKTKAFYG), 333 to 356 (LARLRRLNLSFNYHKKVSFAHLHL), 363 to 386 (LLSLQELDIHGIFFRSLSKTTLQS), 390 to 413 (LPMLQRLHLQLNFISQAQLSIFGA), 415 to 440 (PGLRYVDLSDNRISGAAEPAAATGEV), 472 to 496 (CRTLNFTLDLSRNNLVTVQPEMFVR), 498 to 521 (ARLQCLGLSHNSISQAVNGSQFVP), 522 to 545 (LSNLRVLDLSHNKLDLYHGRSFTE), 547 to 574 (PRLEALDLSYNSQPFSMRGVGHNLSFVA), 576 to 600 (LPALRYLSLAHNGIHSRVSQQLRSA), 602 to 624 (LRALDFSGNTLSQMWAEGDLYLR), 629 to 652 (LRSLVQLDLSQNRLHTLLPRNLDN), 654 to 677 (PKSLRLLRLRDNYLAFFNWSSLAL), 678 to 701 (LPKLEALDLAGNQLKALSNGSLPN), 703 to 725 (TQLQRLDLSGNSIGFVVPSFFAL), 726 to 749 (AVRLRELNLSANALKTVEPSWFGS), and 751 to 774 (AGALKVLDVTANPLHCACGATFVD). N-linked (GlcNAc...) asparagine glycosylation is present at N64. Residues 72–77 (SNRIHH) and 95–109 (KWNCPPASLSPMHFP) contribute to the DNA site. Residues C98 and C110 are joined by a disulfide bond. Residue N129 is glycosylated (N-linked (GlcNAc...) asparagine). DNA is bound by residues Y132, R152, and 179-181 (YYK). An intrachain disulfide couples C178 to C184. An N-linked (GlcNAc...) asparagine glycan is attached at N200. Y208 is a DNA binding site. 2 N-linked (GlcNAc...) asparagine glycosylation sites follow: N210 and N242. Cystine bridges form between C255-C268 and C258-C265. The S-palmitoyl cysteine moiety is linked to residue C258. R262 contributes to the DNA binding site. Residue C265 is the site of S-palmitoyl cysteine attachment. N340 carries an N-linked (GlcNAc...) asparagine glycan. Residues C472 and C502 are joined by a disulfide bond. Residues N476 and N515 are each glycosylated (N-linked (GlcNAc...) asparagine). An N-linked (GlcNAc...) asparagine glycan is attached at N569. N-linked (GlcNAc...) asparagine glycans are attached at residues N671, N696, and N701. The N-linked (GlcNAc...) asparagine glycan is linked to N733. 2 cysteine pairs are disulfide-bonded: C766–C792 and C768–C811. The helical transmembrane segment at 816–836 (LSWVCFSLSLLAVALSLAVPM) threads the bilayer. Residues 837 to 1032 (LHQLCGWDLW…QNFCRGPTTA (196 aa)) lie on the Cytoplasmic side of the membrane. The TIR domain maps to 868 to 1013 (LAYDAFVVFD…SFWAQLGTAL (146 aa)).

It belongs to the Toll-like receptor family. In terms of assembly, monomer and homodimer. Exists as a monomer in the absence of unmethylated cytidine-phosphate-guanosine (CpG) ligand. Proteolytic processing of an insertion loop (Z-loop) is required for homodimerization upon binding to the unmethylated CpG ligand leading to its activation. Interacts with MYD88 via their respective TIR domains. Interacts with BTK. Interacts (via transmembrane domain) with UNC93B1. Interacts with CD300LH; the interaction may promote full activation of TLR9-triggered innate responses. Interacts with CNPY3 and HSP90B1; this interaction is required for proper folding in the endoplasmic reticulum. Interacts with SMPDL3B. Interacts with CD82; this interaction is essential for TLR9-dependent myddosome formation in response to CpG stimulation. In terms of processing, activated by proteolytic cleavage of the flexible loop between repeats LRR14 and LRR15 within the ectodomain. Cleavage requires UNC93B1. Proteolytically processed by first removing the majority of the ectodomain by either asparagine endopeptidase (AEP) or a cathepsin followed by a trimming event that is solely cathepsin mediated and required for optimal receptor signaling. Post-translationally, palmitoylated by ZDHHC3 in the Golgi regulates TLR9 trafficking from the Golgi to endosomes. Depalmitoylation by PPT1 controls the release of TLR9 from UNC93B1 in endosomes.

The protein resides in the endoplasmic reticulum membrane. The protein localises to the endosome. Its subcellular location is the lysosome. It localises to the cytoplasmic vesicle. It is found in the phagosome. In terms of biological role, key component of innate and adaptive immunity. TLRs (Toll-like receptors) control host immune response against pathogens through recognition of molecular patterns specific to microorganisms. TLR9 is a nucleotide-sensing TLR which is activated by unmethylated cytidine-phosphate-guanosine (CpG) dinucleotides. Acts via MYD88 and TRAF6, leading to NF-kappa-B activation, cytokine secretion and the inflammatory response. Upon CpG stimulation, induces B-cell proliferation, activation, survival and antibody production. The chain is Toll-like receptor 9 (TLR9) from Canis lupus familiaris (Dog).